The following is an 86-amino-acid chain: YcgL domain-containing protein Smlt4554 (86 aa).

A YcgL domain is found at 1–85 (MHAYVYKSQL…SVASLMPRHY (85 aa)).

This is YcgL domain-containing protein Smlt4554 from Stenotrophomonas maltophilia (strain K279a).